The following is a 292-amino-acid chain: Elongation factor Ts (292 aa).

The segment at 80-83 (TDFV) is involved in Mg(2+) ion dislocation from EF-Tu.

It belongs to the EF-Ts family.

It is found in the cytoplasm. In terms of biological role, associates with the EF-Tu.GDP complex and induces the exchange of GDP to GTP. It remains bound to the aminoacyl-tRNA.EF-Tu.GTP complex up to the GTP hydrolysis stage on the ribosome. This chain is Elongation factor Ts, found in Cupriavidus metallidurans (strain ATCC 43123 / DSM 2839 / NBRC 102507 / CH34) (Ralstonia metallidurans).